Reading from the N-terminus, the 479-residue chain is MAQHAVYFPDAFLTQMREAMPSTLSFDEFISACQRPLRRSIRINTLKISVADFLALIAPYGWSLTPIPWCHEGFWIERDDEEALPLGSTAEHLSGLFYIQEASSMLPVAALFADDNHPQRVMDMAAAPGSKTTQIAARMGNRGAILANEFSASRVKVLHANISRCGIANTALTHFDGRVFGAALPEMFDAILLDAPCSGEGVVRKDPDALKNWSPESNLDIAATQRELLNSAFHALRPGGTLVYSTCTLNRQENEEVCLWLKETYADAVEFLPLGDLFPDADRALTPEGFLHVFPQIYDCEGFFVARLRKMSSLPAMPAPGYKVGAFPFTPLKGREALHVTQAANAVGLLWDENLHLWQREKEVWLFPAEIESLIGKVRFSRLGIKLAESHNKGYRWQHEATIALACPTHAHAFELSVQEAEEWYRGRDIYPQTPPAADDVLVTFQHQPLGLAKRIGARIKNSYPRELVRDGKLFTGNS.

S-adenosyl-L-methionine is bound by residues 125–131, E149, D176, and D194; that span reads AAAPGSK. C247 (nucleophile) is an active-site residue.

Belongs to the class I-like SAM-binding methyltransferase superfamily. RsmB/NOP family.

It localises to the cytoplasm. The enzyme catalyses cytidine(1407) in 16S rRNA + S-adenosyl-L-methionine = 5-methylcytidine(1407) in 16S rRNA + S-adenosyl-L-homocysteine + H(+). Its function is as follows. Specifically methylates the cytosine at position 1407 (m5C1407) of 16S rRNA. The sequence is that of Ribosomal RNA small subunit methyltransferase F from Salmonella enteritidis PT4 (strain P125109).